Consider the following 716-residue polypeptide: Ubiquitin thioesterase zranb1-B (716 aa).

RanBP2-type zinc fingers lie at residues 3–33 (DLGL…QRHN) and 82–111 (TSSK…QRQQ). Zn(2+) contacts are provided by C10, C13, C24, C27, C88, C91, C102, and C105. The tract at residues 113–143 (SQQHSPLSPSETPQTSGSRPSPVTSDPCEEY) is disordered. A compositionally biased stretch (polar residues) spans 118–136 (PLSPSETPQTSGSRPSPVT). The segment at 152–181 (HAQRWPCSACTYENWPKSLRCVVCDHPKPS) adopts a RanBP2-type 3 zinc-finger fold. Zn(2+) contacts are provided by C158, C161, C172, and C175. The segment at 178 to 228 (PKPSGSPETPQQDSEAESATSPSIVNEQERENVRTAGGGGGGSRGRLRKLS) is disordered. Positions 183-203 (SPETPQQDSEAESATSPSIVN) are enriched in polar residues. ANK repeat units lie at residues 268-298 (RRSD…SGGD) and 321-348 (FTLV…QQTA). One can recognise an OTU domain in the interval 440 to 600 (LYALWNRTAG…RGHFSALVAM (161 aa)). The active-site Nucleophile is the C451. The active-site Proton acceptor is the H593.

This sequence belongs to the peptidase C64 family.

Its subcellular location is the cytoplasm. The protein localises to the nucleus. The enzyme catalyses Thiol-dependent hydrolysis of ester, thioester, amide, peptide and isopeptide bonds formed by the C-terminal Gly of ubiquitin (a 76-residue protein attached to proteins as an intracellular targeting signal).. Functionally, ubiquitin thioesterase, which specifically hydrolyzes 'Lys-29'-linked and 'Lys-33'-linked diubiquitin. Also cleaves 'Lys-63'-linked chains, but with 40-fold less efficiency compared to 'Lys-29'-linked ones. Positive regulator of the Wnt signaling pathway that deubiquitinates apc protein, a negative regulator of Wnt-mediated transcription. Acts as a regulator of autophagy by mediating deubiquitination of pik3c3/vps34, thereby promoting autophagosome maturation. Plays a role in the regulation of cell morphology and cytoskeletal organization. Required in the stress fiber dynamics and cell migration. This chain is Ubiquitin thioesterase zranb1-B (zranb1b), found in Danio rerio (Zebrafish).